The primary structure comprises 148 residues: UPF0179 protein VNG_1401C (148 aa).

This sequence belongs to the UPF0179 family.

The sequence is that of UPF0179 protein VNG_1401C from Halobacterium salinarum (strain ATCC 700922 / JCM 11081 / NRC-1) (Halobacterium halobium).